Consider the following 252-residue polypeptide: Hydroxyacylglutathione hydrolase (252 aa).

Zn(2+)-binding residues include histidine 54, histidine 56, aspartate 58, histidine 59, histidine 111, aspartate 128, and histidine 166.

Belongs to the metallo-beta-lactamase superfamily. Glyoxalase II family. As to quaternary structure, monomer. Zn(2+) serves as cofactor.

It carries out the reaction an S-(2-hydroxyacyl)glutathione + H2O = a 2-hydroxy carboxylate + glutathione + H(+). It functions in the pathway secondary metabolite metabolism; methylglyoxal degradation; (R)-lactate from methylglyoxal: step 2/2. Thiolesterase that catalyzes the hydrolysis of S-D-lactoyl-glutathione to form glutathione and D-lactic acid. The chain is Hydroxyacylglutathione hydrolase from Vibrio vulnificus (strain CMCP6).